The primary structure comprises 156 residues: Snaclec A14 (156 aa).

The signal sequence occupies residues 1 to 23 (MGRFIFVRVGLLVVFLSLSGTGA). Intrachain disulfides connect Cys27–Cys38, Cys55–Cys152, and Cys127–Cys144. Positions 34 to 153 (YDQHCYKAFD…CGDDYPFVCK (120 aa)) constitute a C-type lectin domain. Residue Asn141 is glycosylated (N-linked (GlcNAc...) asparagine).

The protein belongs to the snaclec family. As to quaternary structure, heterodimer; disulfide-linked. In terms of tissue distribution, expressed by the venom gland.

It localises to the secreted. Functionally, interferes with one step of hemostasis (modulation of platelet aggregation, or coagulation cascade, for example). The protein is Snaclec A14 of Macrovipera lebetinus (Levantine viper).